The primary structure comprises 325 residues: Forkhead box protein B1 (325 aa).

Residues 12–103 (QKPPYSYISL…GDMFENGSFL (92 aa)) constitute a DNA-binding region (fork-head). Residues 284-309 (LSNSPPSLSPTSSQTATSQSSPATPS) show a composition bias toward low complexity. The segment at 284–325 (LSNSPPSLSPTSSQTATSQSSPATPSETLTSPASALHSVAVH) is disordered.

As to expression, expressed widespread in the early developing ventricular zone of the neural tube and later restricted to areas of the spinal cord, hindbrain, thalamus and hypothalamus. Expressed in epithelial cells of developing and adult mammary glands.

Its subcellular location is the nucleus. Transcription factor expressed by neural progenitor cells in specific regions of the embryonic neuroepithelium. Essential for the mammillary nuclei maintenance. Negatively regulates the proliferation of oligodendrocyte progenitors and promotes oligodendrocyte maturation. Also expressed in mammary glands, plays a role in lactation, controls development of mammary glands and the inferior colliculi of the midbrain in the central nervous system that regulates the milk-ejection reflex. The protein is Forkhead box protein B1 (Foxb1) of Mus musculus (Mouse).